The primary structure comprises 209 residues: Ribosomal RNA large subunit methyltransferase E (209 aa).

S-adenosyl-L-methionine is bound by residues G63, W65, D83, D99, and D124. Residue K164 is the Proton acceptor of the active site.

It belongs to the class I-like SAM-binding methyltransferase superfamily. RNA methyltransferase RlmE family.

The protein resides in the cytoplasm. It catalyses the reaction uridine(2552) in 23S rRNA + S-adenosyl-L-methionine = 2'-O-methyluridine(2552) in 23S rRNA + S-adenosyl-L-homocysteine + H(+). In terms of biological role, specifically methylates the uridine in position 2552 of 23S rRNA at the 2'-O position of the ribose in the fully assembled 50S ribosomal subunit. This is Ribosomal RNA large subunit methyltransferase E from Escherichia coli O81 (strain ED1a).